We begin with the raw amino-acid sequence, 442 residues long: Magnesium transporter MRS2-1 (442 aa).

The disordered stretch occupies residues 1–30 (MSELKERLLPPRPASAMNLRDASVTRPSAS). Helical transmembrane passes span 378 to 398 (LLLT…GIFG) and 414 to 434 (WVLI…VWFF). Residues 398–400 (GMN) carry the Required for magnesium transport activity motif.

This sequence belongs to the CorA metal ion transporter (MIT) (TC 1.A.35.5) family. As to expression, expressed in the whole plant except stems.

The protein resides in the membrane. Its function is as follows. Magnesium transporter that may mediate the influx of magnesium. The chain is Magnesium transporter MRS2-1 (MRS2-1) from Arabidopsis thaliana (Mouse-ear cress).